Consider the following 384-residue polypeptide: Urotensin-2 receptor (384 aa).

Topologically, residues Met1–Ile54 are extracellular. Asn29 and Asn33 each carry an N-linked (GlcNAc...) asparagine glycan. Residues Gly55–Cys77 traverse the membrane as a helical segment. The Cytoplasmic segment spans residues Arg78–Tyr87. A helical transmembrane segment spans residues Val88–Thr113. Residues Lys114–Arg124 are Extracellular-facing. Cys123 and Cys199 form a disulfide bridge. The chain crosses the membrane as a helical span at residues Val125 to Arg146. The Cytoplasmic segment spans residues Glu147 to Lys167. The helical transmembrane segment at Val168–Leu186 threads the bilayer. At Ala187–Arg209 the chain is on the extracellular side. A helical transmembrane segment spans residues Ala210–Val232. Residues Arg233–Tyr259 are Cytoplasmic-facing. The helical transmembrane segment at Leu260–Arg285 threads the bilayer. Topologically, residues Gly286–Asn299 are extracellular. A helical membrane pass occupies residues Tyr300–Leu320. Over Thr321–Val384 the chain is Cytoplasmic.

The protein belongs to the G-protein coupled receptor 1 family. In terms of tissue distribution, expressed in neural tissue, including sensory epithelia.

It is found in the cell membrane. In terms of biological role, high affinity receptor for urotensin-2 and urotensin-2B. The activity of this receptor is mediated by a G-protein that activate a phosphatidylinositol-calcium second messenger system. This Bos taurus (Bovine) protein is Urotensin-2 receptor (UTS2R).